Here is a 488-residue protein sequence, read N- to C-terminus: Glutamyl-tRNA(Gln) amidotransferase subunit A (488 aa).

Active-site charge relay system residues include Lys-78 and Ser-153. The active-site Acyl-ester intermediate is the Ser-177.

This sequence belongs to the amidase family. GatA subfamily. As to quaternary structure, heterotrimer of A, B and C subunits.

The enzyme catalyses L-glutamyl-tRNA(Gln) + L-glutamine + ATP + H2O = L-glutaminyl-tRNA(Gln) + L-glutamate + ADP + phosphate + H(+). Allows the formation of correctly charged Gln-tRNA(Gln) through the transamidation of misacylated Glu-tRNA(Gln) in organisms which lack glutaminyl-tRNA synthetase. The reaction takes place in the presence of glutamine and ATP through an activated gamma-phospho-Glu-tRNA(Gln). The protein is Glutamyl-tRNA(Gln) amidotransferase subunit A of Caldanaerobacter subterraneus subsp. tengcongensis (strain DSM 15242 / JCM 11007 / NBRC 100824 / MB4) (Thermoanaerobacter tengcongensis).